Consider the following 231-residue polypeptide: MNDPKVIVALDYDNLADALAFVDKIDPSTCRLKVGKEMFTLFGPDFVRELHKRGFSVFLDLKFHDIPNTCSKAVKAAAELGVWMVNVHASGGERMMAASREILEPYGKERPLLIGVTVLTSMESADLQGIGILSAPQDHVLRLATLAKNAGLDGVVCSAQEASLLKQHLGREFKLVTPGIRPAGSEQGDQRRIMTPAQAIASGSDYLVIGRPITQAAHPEVVLEEINSSLV.

Substrate-binding positions include Asp11, Lys33, 60-69 (DLKFHDIPNT), Thr120, Arg181, Gln190, Gly210, and Arg211. Lys62 functions as the Proton donor in the catalytic mechanism.

The protein belongs to the OMP decarboxylase family. Type 1 subfamily. In terms of assembly, homodimer.

The enzyme catalyses orotidine 5'-phosphate + H(+) = UMP + CO2. The protein operates within pyrimidine metabolism; UMP biosynthesis via de novo pathway; UMP from orotate: step 2/2. Functionally, catalyzes the decarboxylation of orotidine 5'-monophosphate (OMP) to uridine 5'-monophosphate (UMP). The sequence is that of Orotidine 5'-phosphate decarboxylase from Vibrio cholerae serotype O1 (strain ATCC 39541 / Classical Ogawa 395 / O395).